The sequence spans 664 residues: RBBP8 N-terminal-like protein (664 aa).

The segment covering 125-140 has biased composition (basic and acidic residues); the sequence is LRGLGDRPKPRAKEGT. Disordered stretches follow at residues 125 to 284 and 369 to 664; these read LRGL…KLSP and RAGS…WEET. Pro residues predominate over residues 241-255; sequence GTPPPLPARSSPPSP. Residues 437-454 show a composition bias toward basic and acidic residues; the sequence is ALDKPLDLSEWGRARGQD. A compositionally biased stretch (polar residues) spans 481–496; sequence SGPLTRSPQALSNGTK. Over residues 516-528 the composition is skewed to low complexity; sequence LPGSQLSLSSPGS. A compositionally biased stretch (pro residues) spans 537–552; it reads PLPPPHPQPPPHPQPP. Basic and acidic residues predominate over residues 554-570; sequence LDGHPEPSKAEVLRPES. Residues 584–597 are compositionally biased toward polar residues; the sequence is GLSSQAEATTSTTG. Positions 628-637 are enriched in basic residues; sequence KKPSRGRRKL. The span at 654–664 shows a compositional bias: polar residues; it reads PSPNSSPWEET.

This Homo sapiens (Human) protein is RBBP8 N-terminal-like protein (RBBP8NL).